Consider the following 71-residue polypeptide: Long neurotoxin 1 (71 aa).

Intrachain disulfides connect cysteine 3–cysteine 21, cysteine 14–cysteine 42, cysteine 27–cysteine 31, cysteine 46–cysteine 57, and cysteine 58–cysteine 63.

It belongs to the three-finger toxin family. Long-chain subfamily. Type II alpha-neurotoxin sub-subfamily. Expressed by the venom gland.

The protein resides in the secreted. Binds with high affinity to muscular (alpha-1/CHRNA1) and neuronal (alpha-7/CHRNA7) nicotinic acetylcholine receptor (nAChR) and inhibits acetylcholine from binding to the receptor, thereby impairing neuromuscular and neuronal transmission. The sequence is that of Long neurotoxin 1 from Naja melanoleuca (Forest cobra).